A 467-amino-acid chain; its full sequence is Uronate isomerase (467 aa).

Belongs to the metallo-dependent hydrolases superfamily. Uronate isomerase family.

It catalyses the reaction D-glucuronate = D-fructuronate. The catalysed reaction is aldehydo-D-galacturonate = keto-D-tagaturonate. The protein operates within carbohydrate metabolism; pentose and glucuronate interconversion. This chain is Uronate isomerase, found in Haemophilus influenzae (strain PittGG).